Consider the following 284-residue polypeptide: Bifunctional protein FolD (284 aa).

Residues glycine 165–serine 167, serine 190, and isoleucine 231 each bind NADP(+).

Belongs to the tetrahydrofolate dehydrogenase/cyclohydrolase family. In terms of assembly, homodimer.

It catalyses the reaction (6R)-5,10-methylene-5,6,7,8-tetrahydrofolate + NADP(+) = (6R)-5,10-methenyltetrahydrofolate + NADPH. The enzyme catalyses (6R)-5,10-methenyltetrahydrofolate + H2O = (6R)-10-formyltetrahydrofolate + H(+). Its pathway is one-carbon metabolism; tetrahydrofolate interconversion. Catalyzes the oxidation of 5,10-methylenetetrahydrofolate to 5,10-methenyltetrahydrofolate and then the hydrolysis of 5,10-methenyltetrahydrofolate to 10-formyltetrahydrofolate. The chain is Bifunctional protein FolD from Streptococcus thermophilus (strain ATCC BAA-491 / LMD-9).